The chain runs to 223 residues: Ribosomal RNA small subunit methyltransferase G (223 aa).

S-adenosyl-L-methionine is bound by residues G85, F90, and R154.

Belongs to the methyltransferase superfamily. RNA methyltransferase RsmG family.

The protein localises to the cytoplasm. The enzyme catalyses guanosine(527) in 16S rRNA + S-adenosyl-L-methionine = N(7)-methylguanosine(527) in 16S rRNA + S-adenosyl-L-homocysteine. Functionally, specifically methylates the N7 position of guanine in position 527 of 16S rRNA. The protein is Ribosomal RNA small subunit methyltransferase G of Rhodopseudomonas palustris (strain ATCC BAA-98 / CGA009).